Reading from the N-terminus, the 128-residue chain is MEIGKKYELNPHRIKSFIDISSSNASMVGIIQENGGWFEVKSISSLDGFDYVTEIICANGEIYNDDGMGDDYFELSEEEFYCFREYKEPTSEEDEVKDKVSGVTKIHCIVDENNVDEIIELLRKTFKK.

This is an uncharacterized protein from Escherichia coli (Bacteriophage T4).